Here is a 336-residue protein sequence, read N- to C-terminus: Protein SGT1 homolog (336 aa).

Alanine 2 bears the N-acetylalanine mark. TPR repeat units lie at residues 11–44, 45–78, and 79–112; these read SQRL…NPDD, AQYY…NPNN, and CTAL…DSTD. The region spanning 140–229 is the CS domain; sequence QSKIKYDWYQ…PEAVRWEKLE (90 aa). Phosphothreonine is present on threonine 236. In terms of domain architecture, SGS spans 247–336; it reads MYPSSSHYTR…PPDDMEWKQY (90 aa). Serine 252 carries the phosphoserine modification. Threonine 255 is subject to Phosphothreonine. A Glycyl lysine isopeptide (Lys-Gly) (interchain with G-Cter in SUMO1); alternate cross-link involves residue lysine 266. Lysine 266 participates in a covalent cross-link: Glycyl lysine isopeptide (Lys-Gly) (interchain with G-Cter in SUMO2); alternate. Position 302 is a phosphoserine (serine 302).

It belongs to the SGT1 family. Probably associates with SCF (SKP1-CUL1-F-box protein) complex through interaction with SKP1. Interacts with S100A6. Interacts with HSP90. Phosphorylated at Ser-252 and Ser-302, dephosphorylation promotes nuclear translocation, most likely due to disruption of the SUGT1-HSP90 complex.

It is found in the cytoplasm. It localises to the nucleus. May play a role in ubiquitination and subsequent proteasomal degradation of target proteins. The chain is Protein SGT1 homolog from Mus musculus (Mouse).